A 265-amino-acid polypeptide reads, in one-letter code: Hydroxyethylthiazole kinase (265 aa).

Position 43 (Met-43) interacts with substrate. 2 residues coordinate ATP: Arg-119 and Ser-165. Ala-192 provides a ligand contact to substrate.

Belongs to the Thz kinase family. Mg(2+) serves as cofactor.

It carries out the reaction 5-(2-hydroxyethyl)-4-methylthiazole + ATP = 4-methyl-5-(2-phosphooxyethyl)-thiazole + ADP + H(+). It participates in cofactor biosynthesis; thiamine diphosphate biosynthesis; 4-methyl-5-(2-phosphoethyl)-thiazole from 5-(2-hydroxyethyl)-4-methylthiazole: step 1/1. Catalyzes the phosphorylation of the hydroxyl group of 4-methyl-5-beta-hydroxyethylthiazole (THZ). This Haemophilus influenzae (strain 86-028NP) protein is Hydroxyethylthiazole kinase.